The primary structure comprises 232 residues: MALIRDRKSHHSEMSKCHNYDLKPAKWDTSQEQQKQRLALTTSQPGENGIIRGRYPIEKLKISPMFVVRVLAIALAIRFTLNTLMWLAIFKETFQPVLCNKEVPVSSREGYCGPCPNNWICHRNNCYQFFNEEKTWNQSQASCLSQNSSLLKIYSKEEQDFLKLVKSYHWMGLVQIPANGSWQWEDGSSLSYNQLTLVEIPKGSCAVYGSSFKAYTEDCANLNTYICMKRAV.

The Cytoplasmic segment spans residues 1-66 (MALIRDRKSH…IEKLKISPMF (66 aa)). A helical; Signal-anchor for type II membrane protein transmembrane segment spans residues 67-89 (VVRVLAIALAIRFTLNTLMWLAI). Topologically, residues 90-232 (FKETFQPVLC…NTYICMKRAV (143 aa)) are extracellular. Disulfide bonds link cysteine 112-cysteine 121 and cysteine 115-cysteine 126. A C-type lectin domain is found at 122-228 (HRNNCYQFFN…CANLNTYICM (107 aa)). N-linked (GlcNAc...) asparagine glycosylation is found at asparagine 137, asparagine 147, and asparagine 179. 2 cysteine pairs are disulfide-bonded: cysteine 143/cysteine 227 and cysteine 205/cysteine 219.

In terms of assembly, homodimer; disulfide-linked. Heterohexamer composed of two subunits of KLRK1 and four subunits of HCST/DAP10. Isoform 1 (via transmembrane domain) interacts with HCST/DAP10; the interaction is required for KLRK1 cell surface expression on activated CD8(+) T-cells, but is dispensable on activated TYROBP-expressing NK cells. Isoform 2 (via transmembrane domain) interacts with HCST/DAP10 (via transmembrane domain); the interaction is required for KLRK1 NK cell surface expression and induces NK cell-mediated cytotoxicity. Isoform 2 (via transmembrane domain) interacts with TYROBP (via transmembrane domain); the interaction is required for KLRK1 NK cell surface expression and induce NK cell-mediated cytotoxicity and cytokine secretion. Isoform 1 does not interact with TYROBP. Interacts with CEACAM1; recruits PTPN6 that dephosphorylates VAV1. In terms of tissue distribution, expressed in natural killer (NK) cells, activated CD8(+) alpha-beta and gamma-delta T-cells and natural killer T (NKT) cells (at protein level). May be expressed on dendritic cell (DC). Isoform 1 is strongly expressed in natural killer (NK) cells. Isoform 2 is weakly expressed in natural killer (NK) cells. Isoform 1 and isoform 2 are expressed in stimulated, but not in unstimulated, CD8(+) T-cells and macrophages.

It is found in the cell membrane. Its function is as follows. Functions as an activating and costimulatory receptor involved in immunosurveillance upon binding to various cellular stress-inducible ligands displayed at the surface of autologous tumor cells and virus-infected cells. Provides both stimulatory and costimulatory innate immune responses on activated killer (NK) cells, leading to cytotoxic activity. Acts as a costimulatory receptor for T-cell receptor (TCR) in CD8(+) T-cell-mediated adaptive immune responses by amplifying T-cell activation. Stimulates perforin-mediated elimination of ligand-expressing tumor cells. Signaling involves calcium influx, culminating in the expression of TNF-alpha. Participates in NK cell-mediated bone marrow graft rejection. May play a regulatory role in differentiation and survival of NK cells. Binds to ligands belonging to various subfamilies of MHC class I-related glycoproteins including RAET1A, RAET1B, RAET1C, RAET1D, RAET1E, H60 and MULT1. This is NKG2-D type II integral membrane protein (Klrk1) from Mus musculus (Mouse).